The chain runs to 957 residues: Valine--tRNA ligase (957 aa).

The 'HIGH' region motif lies at 45-55; it reads PNVTGSLHMGH. Positions 571-575 match the 'KMSKS' region motif; sequence KMSKS. Position 574 (Lys-574) interacts with ATP. Residues 887–946 are a coiled coil; sequence VVDFAAEQARLEKELGKAEADIKRAEAKLANEKFVANAAEEVVEEEREKREAAVARKVKI.

It belongs to the class-I aminoacyl-tRNA synthetase family. ValS type 1 subfamily. As to quaternary structure, monomer.

The protein localises to the cytoplasm. It carries out the reaction tRNA(Val) + L-valine + ATP = L-valyl-tRNA(Val) + AMP + diphosphate. Catalyzes the attachment of valine to tRNA(Val). As ValRS can inadvertently accommodate and process structurally similar amino acids such as threonine, to avoid such errors, it has a 'posttransfer' editing activity that hydrolyzes mischarged Thr-tRNA(Val) in a tRNA-dependent manner. The chain is Valine--tRNA ligase from Rhodopseudomonas palustris (strain ATCC BAA-98 / CGA009).